The chain runs to 588 residues: Aspartate--tRNA ligase (588 aa).

An L-aspartate-binding site is contributed by Glu-172. Positions 196-199 (QLFK) are aspartate. Arg-218 serves as a coordination point for L-aspartate. ATP contacts are provided by residues 218–220 (RDE) and Gln-227. His-449 is an L-aspartate binding site. An ATP-binding site is contributed by Glu-483. Position 490 (Arg-490) interacts with L-aspartate. An ATP-binding site is contributed by 535–538 (GLDR).

Belongs to the class-II aminoacyl-tRNA synthetase family. Type 1 subfamily. In terms of assembly, homodimer.

It localises to the cytoplasm. The catalysed reaction is tRNA(Asp) + L-aspartate + ATP = L-aspartyl-tRNA(Asp) + AMP + diphosphate. Functionally, catalyzes the attachment of L-aspartate to tRNA(Asp) in a two-step reaction: L-aspartate is first activated by ATP to form Asp-AMP and then transferred to the acceptor end of tRNA(Asp). This Haemophilus influenzae (strain PittEE) protein is Aspartate--tRNA ligase.